The primary structure comprises 336 residues: Fructose-1,6-bisphosphatase class 1 (336 aa).

The Mg(2+) site is built by Glu90, Asp112, Leu114, and Asp115. Residues 115–118, Asn207, and Lys273 each bind substrate; that span reads DGSS. Glu279 contacts Mg(2+).

It belongs to the FBPase class 1 family. As to quaternary structure, homotetramer. It depends on Mg(2+) as a cofactor.

The protein resides in the cytoplasm. The enzyme catalyses beta-D-fructose 1,6-bisphosphate + H2O = beta-D-fructose 6-phosphate + phosphate. The protein operates within carbohydrate biosynthesis; gluconeogenesis. In Xanthomonas euvesicatoria pv. vesicatoria (strain 85-10) (Xanthomonas campestris pv. vesicatoria), this protein is Fructose-1,6-bisphosphatase class 1.